The chain runs to 366 residues: MKFNSHIENLPIYEAGKPIELVIREFGIDQNDIIKLASNENPLGTSKKVIEKIKNVAQNSSLYPDDSYYELKDGLSNLYKVEPKNVIIGSGSDQIIEFALHAKANEKKGILVSGVTFAMYEIYAKHVGAKIYKTKSKEHNLAEFREIYRTNKNDISVIFLCLPNNPLGECLDADEVFSFIKDVSEDTLVVIDGAYMEFAKFKSSKKEIDPKTLIQTFSNALYLGTFSKAYGLGGMRVGYGIANEEIIKALHRLRAPFNITTLSLAAAIEALKDNDFLKETLENNFKEMKVYEEFAKENSIEFIESYTNFITFIFDQHQNATKICDNLLKQGIILRNLKSYSMNAIRITIGKNEQNRRVLDMLKKEI.

N6-(pyridoxal phosphate)lysine is present on Lys228.

It belongs to the class-II pyridoxal-phosphate-dependent aminotransferase family. Histidinol-phosphate aminotransferase subfamily. Homodimer. The cofactor is pyridoxal 5'-phosphate.

The catalysed reaction is L-histidinol phosphate + 2-oxoglutarate = 3-(imidazol-4-yl)-2-oxopropyl phosphate + L-glutamate. It functions in the pathway amino-acid biosynthesis; L-histidine biosynthesis; L-histidine from 5-phospho-alpha-D-ribose 1-diphosphate: step 7/9. In Campylobacter fetus subsp. fetus (strain 82-40), this protein is Histidinol-phosphate aminotransferase.